The following is a 577-amino-acid chain: MFS-type transporter CPUR_05422 (577 aa).

The segment at 1–49 (MSAMSAMGKPEHGSATTSDLEHRATESSLEKQDVEAAPPGPVKPVDPSP) is disordered. Residues 19-34 (DLEHRATESSLEKQDV) show a composition bias toward basic and acidic residues. Residues 38–47 (PPGPVKPVDP) show a composition bias toward pro residues. The next 14 helical transmembrane spans lie at 52–72 (STLK…LVAV), 93–113 (DVGW…LLFG), 123–143 (VVLL…GAAP), 157–177 (VGSA…IPLA), 184–204 (GLMG…GGAF), 212–232 (WCFY…FFYF), 249–269 (ILSL…CLLL), 285–305 (IIVL…VQIC), 326–346 (FLTT…IPIW), 359–379 (GIQL…GGLL), 383–403 (IGYY…GAGL), 416–436 (VIGY…TPNL), 449–469 (MGIA…VAVG), and 525–545 (VFIV…CMEW). The segment at 554-577 (PPAGPPAGAPTESAPVETKAAGHT) is disordered.

It belongs to the major facilitator superfamily. TCR/Tet family.

It is found in the membrane. In terms of biological role, MFS-type transporter; part of the ergochrome gene cluster responsible for the typical purple-black color of the ergot sclerotia. The ergochrome gene cluster produces several ergot pigments including the yellow ergochrome secalonic acid and its derivatives, as well as the red anthraquinones endocrocin and clavorubin. The sequence is that of MFS-type transporter CPUR_05422 from Claviceps purpurea (strain 20.1) (Ergot fungus).